A 146-amino-acid chain; its full sequence is Hemoglobin subunit beta-1 (146 aa).

The 145-residue stretch at 2-146 (HWTEKERTII…VVSALGKQYH (145 aa)) folds into the Globin domain. Heme b contacts are provided by histidine 63 and histidine 92.

This sequence belongs to the globin family. Hb1 is a heterotetramer of two alpha chains and two beta-1 chains. Red blood cells.

Involved in oxygen transport from gills to the various peripheral tissues. In Dissostichus eleginoides (Patagonian toothfish), this protein is Hemoglobin subunit beta-1.